A 361-amino-acid polypeptide reads, in one-letter code: G2/mitotic-specific cyclin-B (361 aa).

The protein belongs to the cyclin family. Cyclin AB subfamily.

In terms of biological role, essential for the control of the cell cycle at the G2/M (mitosis) transition. Interacts with the CDC2 protein kinase to form MPF. G2/M cyclins accumulate steadily during G2 and are abruptly destroyed at mitosis. The polypeptide is G2/mitotic-specific cyclin-B (Hydra vulgaris (Hydra)).